The sequence spans 385 residues: S-adenosylmethionine synthase (385 aa).

His15 lines the ATP pocket. Asp17 is a Mg(2+) binding site. Glu43 lines the K(+) pocket. Glu56 and Gln99 together coordinate L-methionine. The flexible loop stretch occupies residues 99-109; sequence QSVDIAQGVDR. Residues 164–166, 230–231, Asp239, 245–246, and Lys266 each bind ATP; these read DAK, RF, and RK. Asp239 is a binding site for L-methionine. Lys270 lines the L-methionine pocket.

Belongs to the AdoMet synthase family. Homotetramer; dimer of dimers. Requires Mg(2+) as cofactor. It depends on K(+) as a cofactor.

It is found in the cytoplasm. The catalysed reaction is L-methionine + ATP + H2O = S-adenosyl-L-methionine + phosphate + diphosphate. The protein operates within amino-acid biosynthesis; S-adenosyl-L-methionine biosynthesis; S-adenosyl-L-methionine from L-methionine: step 1/1. Catalyzes the formation of S-adenosylmethionine (AdoMet) from methionine and ATP. The overall synthetic reaction is composed of two sequential steps, AdoMet formation and the subsequent tripolyphosphate hydrolysis which occurs prior to release of AdoMet from the enzyme. The sequence is that of S-adenosylmethionine synthase from Alkalilimnicola ehrlichii (strain ATCC BAA-1101 / DSM 17681 / MLHE-1).